The primary structure comprises 109 residues: Nucleoid-associated protein PC1_1077 (109 aa).

It belongs to the YbaB/EbfC family. Homodimer.

The protein resides in the cytoplasm. It is found in the nucleoid. Functionally, binds to DNA and alters its conformation. May be involved in regulation of gene expression, nucleoid organization and DNA protection. This chain is Nucleoid-associated protein PC1_1077, found in Pectobacterium carotovorum subsp. carotovorum (strain PC1).